Consider the following 303-residue polypeptide: GTPase Era (303 aa).

Residues 8–176 form the Era-type G domain; the sequence is YCGFIAIVGR…ASIVRKHMPE (169 aa). The segment at 16 to 23 is G1; the sequence is GRPNVGKS. 16 to 23 contacts GTP; it reads GRPNVGKS. The segment at 42-46 is G2; sequence QTTRH. The tract at residues 63–66 is G3; the sequence is DTPG. GTP is bound by residues 63–67 and 125–128; these read DTPGL and NKVD. A G4 region spans residues 125 to 128; it reads NKVD. The tract at residues 155–157 is G5; sequence ISA. Residues 207–284 enclose the KH type-2 domain; sequence LGEELPYSVT…HLELWVKVKS (78 aa).

It belongs to the TRAFAC class TrmE-Era-EngA-EngB-Septin-like GTPase superfamily. Era GTPase family. Monomer.

The protein resides in the cytoplasm. It is found in the cell inner membrane. Functionally, an essential GTPase that binds both GDP and GTP, with rapid nucleotide exchange. Plays a role in 16S rRNA processing and 30S ribosomal subunit biogenesis and possibly also in cell cycle regulation and energy metabolism. In Yersinia enterocolitica serotype O:8 / biotype 1B (strain NCTC 13174 / 8081), this protein is GTPase Era.